Here is a 211-residue protein sequence, read N- to C-terminus: Thymidylate kinase (211 aa).

Residue 10-17 participates in ATP binding; sequence GVEGCGKT.

It belongs to the thymidylate kinase family.

It catalyses the reaction dTMP + ATP = dTDP + ADP. Functionally, phosphorylation of dTMP to form dTDP in both de novo and salvage pathways of dTTP synthesis. This Nostoc punctiforme (strain ATCC 29133 / PCC 73102) protein is Thymidylate kinase.